The following is a 561-amino-acid chain: DNA ligase B (561 aa).

Catalysis depends on Lys125, which acts as the N6-AMP-lysine intermediate.

Belongs to the NAD-dependent DNA ligase family. LigB subfamily.

It catalyses the reaction NAD(+) + (deoxyribonucleotide)n-3'-hydroxyl + 5'-phospho-(deoxyribonucleotide)m = (deoxyribonucleotide)n+m + AMP + beta-nicotinamide D-nucleotide.. Functionally, catalyzes the formation of phosphodiester linkages between 5'-phosphoryl and 3'-hydroxyl groups in double-stranded DNA using NAD as a coenzyme and as the energy source for the reaction. The sequence is that of DNA ligase B from Salmonella choleraesuis (strain SC-B67).